Here is a 291-residue protein sequence, read N- to C-terminus: D-alanine--D-alanine ligase (291 aa).

Residues 99–291 (KRIVKSLGIN…FKKLISIIIT (193 aa)) enclose the ATP-grasp domain. 125–179 (EWNKFPAVVKPVREGSSVGLKIVESLEELKEYALDLLKKTERVMVEEFVEGRDMT) contributes to the ATP binding site. Asp245, Glu258, and Asn260 together coordinate Mg(2+).

The protein belongs to the D-alanine--D-alanine ligase family. Requires Mg(2+) as cofactor. It depends on Mn(2+) as a cofactor.

Its subcellular location is the cytoplasm. The catalysed reaction is 2 D-alanine + ATP = D-alanyl-D-alanine + ADP + phosphate + H(+). It functions in the pathway cell wall biogenesis; peptidoglycan biosynthesis. In terms of biological role, cell wall formation. This chain is D-alanine--D-alanine ligase, found in Aquifex aeolicus (strain VF5).